A 346-amino-acid polypeptide reads, in one-letter code: Serpentine receptor class gamma-20 (346 aa).

7 helical membrane passes run 27-47 (VMLSILEYLVQATYLSVSAVL), 69-89 (FFVLYAAEAVMNVYSCVIEVL), 106-128 (PFFFTPSILTKLYFLLNHYCLAF), 157-177 (ILAPVLVSLFVLPLGVTWNIL), 212-232 (IPCLFLMIVFFLASIFGLTML), 254-274 (TMLFAIAQIYFAFLAGYLPGI), and 279-299 (LLISFNVFDVLYVYSPIALIL).

It belongs to the nematode receptor-like protein srg family.

It is found in the membrane. This Caenorhabditis elegans protein is Serpentine receptor class gamma-20 (srg-20).